The following is a 279-amino-acid chain: Phage-like element PBSX protein XepA (279 aa).

It to B.subtilis YqxG/YqdC.

Functionally, not known; does not seem to be involved in host cell lysis. This is Phage-like element PBSX protein XepA (xepA) from Bacillus subtilis (strain 168).